The chain runs to 485 residues: GlcNAc-binding protein A (485 aa).

The first 23 residues, Met1 to Gly23, serve as a signal peptide directing secretion. One can recognise a Chitin-binding type-4 domain in the interval His24–Phe201. The Chitin-binding type-3 domain maps to Ala437–Trp478.

It belongs to the GbpA family.

It is found in the secreted. In terms of biological role, probably interacts with GlcNAc residues. May promote attachment to both epithelial cell surfaces and chitin. The chain is GlcNAc-binding protein A from Vibrio cholerae serotype O1 (strain M66-2).